Here is a 475-residue protein sequence, read N- to C-terminus: MSPQTETKASVGFKAGVKDYKLTYYTPDYETKDTDILAAFRVTPQPGVPPEEAGAAVAAESSTGTWTTVWTDGLTSLDRYKGRCYHIEPVAGEENQYIAYVAYPLDLFEEGSVTNMFTSIVGNVFGFKALRALRLEDLRIPTAYVKTFQGPPHGIQVERDKLNKYGRPLLGCTIKPKLGLSAKNYGRAVYECLRGGLDFTKDDENVNSQPFMRWRDRFLFCTEALYKAQTETGEIKGHYLNATAGTCEEMIKRAVFARELGVPIVMHDYLTGGFTANTSLAHYCRDNGLLLHIHRAMHAVIDRQKNHGIHFRVLAKALRMSGGDHIHSGTVVGKLEGERDITLGFVDLLRDDFIEKDRSRGIYFTQDWVSLPGVLPVASGGIHVWHMPALTEIFGDDSVLQFGGGTLGHPWGNAPGAVANRVALEACVQARNEGRDLAREGNEIIRKACKWSRELAAACEVWKEIKFEFEAMDTL.

Residues methionine 1–serine 2 constitute a propeptide that is removed on maturation. Position 3 is an N-acetylproline (proline 3). Residue lysine 14 is modified to N6,N6,N6-trimethyllysine. Positions 123 and 173 each coordinate substrate. Lysine 175 acts as the Proton acceptor in catalysis. Lysine 177 lines the substrate pocket. Residues lysine 201, aspartate 203, and glutamate 204 each coordinate Mg(2+). Lysine 201 is subject to N6-carboxylysine. The Proton acceptor role is filled by histidine 294. Residues arginine 295, histidine 327, and serine 379 each contribute to the substrate site.

The protein belongs to the RuBisCO large chain family. Type I subfamily. Heterohexadecamer of 8 large chains and 8 small chains; disulfide-linked. The disulfide link is formed within the large subunit homodimers. The cofactor is Mg(2+). Post-translationally, the disulfide bond which can form in the large chain dimeric partners within the hexadecamer appears to be associated with oxidative stress and protein turnover.

The protein resides in the plastid. Its subcellular location is the chloroplast. The enzyme catalyses 2 (2R)-3-phosphoglycerate + 2 H(+) = D-ribulose 1,5-bisphosphate + CO2 + H2O. It carries out the reaction D-ribulose 1,5-bisphosphate + O2 = 2-phosphoglycolate + (2R)-3-phosphoglycerate + 2 H(+). Functionally, ruBisCO catalyzes two reactions: the carboxylation of D-ribulose 1,5-bisphosphate, the primary event in carbon dioxide fixation, as well as the oxidative fragmentation of the pentose substrate in the photorespiration process. Both reactions occur simultaneously and in competition at the same active site. This Pelargonium hortorum (Common geranium) protein is Ribulose bisphosphate carboxylase large chain.